Reading from the N-terminus, the 174-residue chain is MGRTLENKQQIVEELKQLLGEAEMALVLDYKGLSIKEMSDLRGRLAANGICKVTKNTLMRRAIDGNDTWSDLDPLLTGTNAFVLVKGDVGGAVKAVQSFQKDSKKSELKGGLFEGRLLSQNDIKAIGDLPSKEGLMAQIAGSINAVATKLAVGVNEVPSGLARALQQHADSENS.

This sequence belongs to the universal ribosomal protein uL10 family. Part of the ribosomal stalk of the 50S ribosomal subunit. The N-terminus interacts with L11 and the large rRNA to form the base of the stalk. The C-terminus forms an elongated spine to which L12 dimers bind in a sequential fashion forming a multimeric L10(L12)X complex.

Its function is as follows. Forms part of the ribosomal stalk, playing a central role in the interaction of the ribosome with GTP-bound translation factors. The polypeptide is Large ribosomal subunit protein uL10 (Synechococcus sp. (strain RCC307)).